The following is a 1244-amino-acid chain: Alpha-protein kinase 1 (1244 aa).

ADP-D-glycero-beta-D-manno-heptose-binding positions include F61, Q67, R116, 150 to 153 (RQAR), D231, K233, 236 to 237 (ST), and F295. 4 disordered regions span residues 650-675 (LQEPNNDNLEPSQNQPQQQMPLTPFS), 701-737 (VRNMGPRNTSAHSRPSYRSASWSSDSGRPKNMGTHPS), 757-798 (VKDR…TEDA), and 824-848 (NWPVQNPDSRKSGGPVAEQGIDPDA). The segment covering 652–675 (EPNNDNLEPSQNQPQQQMPLTPFS) has biased composition (polar residues). Residues 713-726 (SRPSYRSASWSSDS) show a composition bias toward low complexity. The segment covering 757-771 (VKDRQGKEQGEEISE) has biased composition (basic and acidic residues). Acidic residues predominate over residues 787–798 (PEGETAESTEDA). Residues 1017-1237 (KYSKKSELWT…ICHRLSLTRP (221 aa)) enclose the Alpha-type protein kinase domain.

Belongs to the protein kinase superfamily. Alpha-type protein kinase family. ALPK subfamily. As to expression, highly expressed in liver. Expressed in the optic nerve and retinal pigmented epithelium. Lower expression is observed in the macula and extramacular retina.

Its subcellular location is the cytoplasm. The protein resides in the cytosol. It localises to the cytoskeleton. The protein localises to the spindle pole. It is found in the microtubule organizing center. Its subcellular location is the centrosome. The protein resides in the cell projection. It localises to the cilium. It catalyses the reaction L-seryl-[protein] + ATP = O-phospho-L-seryl-[protein] + ADP + H(+). It carries out the reaction L-threonyl-[protein] + ATP = O-phospho-L-threonyl-[protein] + ADP + H(+). Its activity is regulated as follows. Serine/threonine-protein kinase activity is stimulated upon ADP-D-glycero-beta-D-manno-heptose (ADP-Heptose)-binding. Serine/threonine-protein kinase that detects bacterial pathogen-associated molecular pattern metabolites (PAMPs) and initiates an innate immune response, a critical step for pathogen elimination and engagement of adaptive immunity. Specifically recognizes and binds ADP-D-glycero-beta-D-manno-heptose (ADP-Heptose), a potent PAMP present in all Gram-negative and some Gram-positive bacteria. ADP-Heptose-binding stimulates its kinase activity to phosphorylate and activate TIFA, triggering pro-inflammatory NF-kappa-B signaling. May be involved in monosodium urate monohydrate (MSU)-induced inflammation by mediating phosphorylation of unconventional myosin MYO9A. May also play a role in apical protein transport by mediating phosphorylation of unconventional myosin MYO1A. May play a role in ciliogenesis. The sequence is that of Alpha-protein kinase 1 from Homo sapiens (Human).